The chain runs to 208 residues: Outer-membrane lipoprotein carrier protein (208 aa).

Positions 1–21 (MKKLNTLLLVLGSLVATPSFA) are cleaved as a signal peptide. Residues 188-208 (KSTFEFTPPEGVEIDDQSNGE) form a disordered region. Residues 199–208 (VEIDDQSNGE) show a composition bias toward acidic residues.

This sequence belongs to the LolA family. In terms of assembly, monomer.

The protein localises to the periplasm. In terms of biological role, participates in the translocation of lipoproteins from the inner membrane to the outer membrane. Only forms a complex with a lipoprotein if the residue after the N-terminal Cys is not an aspartate (The Asp acts as a targeting signal to indicate that the lipoprotein should stay in the inner membrane). This is Outer-membrane lipoprotein carrier protein from Pseudoalteromonas translucida (strain TAC 125).